Consider the following 321-residue polypeptide: Probable arabinan endo-1,5-alpha-L-arabinosidase C (321 aa).

The signal sequence occupies residues 1 to 20 (MYLYTLILLFLASVNVNAYA). Asp-33 serves as the catalytic Proton acceptor. N-linked (GlcNAc...) asparagine glycosylation is found at Asn-75 and Asn-192. The active-site Proton donor is the Glu-200. A glycan (N-linked (GlcNAc...) asparagine) is linked at Asn-224.

It belongs to the glycosyl hydrolase 43 family.

Its subcellular location is the secreted. It carries out the reaction Endohydrolysis of (1-&gt;5)-alpha-arabinofuranosidic linkages in (1-&gt;5)-arabinans.. It participates in glycan metabolism; L-arabinan degradation. Endo-1,5-alpha-L-arabinanase involved in degradation of pectin. Its preferred substrate is linear 1,5-alpha-L-arabinan. The sequence is that of Probable arabinan endo-1,5-alpha-L-arabinosidase C (abnC) from Neosartorya fischeri (strain ATCC 1020 / DSM 3700 / CBS 544.65 / FGSC A1164 / JCM 1740 / NRRL 181 / WB 181) (Aspergillus fischerianus).